Here is a 158-residue protein sequence, read N- to C-terminus: MSEAGDTSPQPGKTGQPKAGDRRRARALAMQGLYQRHFSKTPISDIEAEFMVDNDMSKVDIMYFRDLLRGVHREQAELDKLLEPFLDRPLKEVDPVELAIVRLGAYELKHRIDVPYKVVINEGIEMAKRFGGTEGHKFVNSILDKLSRRLRLAETRPR.

The segment covering 1 to 13 (MSEAGDTSPQPGK) has biased composition (polar residues). Residues 1-24 (MSEAGDTSPQPGKTGQPKAGDRRR) are disordered.

It belongs to the NusB family.

Involved in transcription antitermination. Required for transcription of ribosomal RNA (rRNA) genes. Binds specifically to the boxA antiterminator sequence of the ribosomal RNA (rrn) operons. This is Transcription antitermination protein NusB from Marinobacter nauticus (strain ATCC 700491 / DSM 11845 / VT8) (Marinobacter aquaeolei).